A 596-amino-acid polypeptide reads, in one-letter code: Transcription factor EGL1 (596 aa).

Residues E401 to L450 form the bHLH domain.

In terms of assembly, efficient DNA binding requires dimerization with another bHLH protein. Homodimer and heterodimer with GL3. Interacts with CPC, MYB0/GL1, MYB5, MYB23, MYB113, MYB114, MYB75/PAP1, MYB90/PAP2, TT2, TRY, TTG1 and MYB66/WER. In terms of tissue distribution, ubiquitous with higher levels in buds and flowers. Specifically localized in developing root hair cells. Expressed in epidermal root hair cells (trichoblasts) and moves to root hairless cells (atrichoblasts) by a cell-to-cell movement through plasmodesmata (at protein level).

Its subcellular location is the nucleus. Its function is as follows. Transcription activator, when associated with MYB75/PAP1, MYB90/PAP2 or TT2. Involved in epidermal cell fate specification. Negatively regulates stomata formation but promotes trichome formation. Together with MYB66/WER, promotes the formation of non-hair cells in root epidermis cells in the N position. Whereas together with CPC, promotes the formation of hair cells in root epidermis cells in the H position by inhibiting non-hair cell formation. Also seems to play a role in the activation of anthocyanin biosynthesis, probably together with MYB75/PAP1. Involved in seed mucilage production. Activates the transcription of GL2. The protein is Transcription factor EGL1 (BHLH2) of Arabidopsis thaliana (Mouse-ear cress).